Consider the following 662-residue polypeptide: Sodium/glucose cotransporter 1 (662 aa).

Residues 1-24 (MDSSTLSPLTTSTAAPLESYERIR) are Extracellular-facing. Residues 25 to 47 (NAADISVIVIYFLVVMAVGLWAM) form a helical membrane-spanning segment. The Cytoplasmic portion of the chain corresponds to 48–66 (FSTNRGTVGGFFLAGRSMV). A helical transmembrane segment spans residues 67-90 (WWPIGASLFASNIGSGHFVGLAGT). Residues 91–95 (GAASG) lie on the Extracellular side of the membrane. Residues 96 to 117 (IATGGFEWNALIMVVVLGWVFV) form a helical membrane-spanning segment. Residues 118-139 (PIYIRAGVVTMPEYLQKRFGGK) lie on the Cytoplasmic side of the membrane. Residues 140–169 (RIQIYLSILSLLLYIFTKISADIFSGAIFI) form a helical membrane-spanning segment. Residues 170 to 176 (QLTLGLD) are Extracellular-facing. The chain crosses the membrane as a helical span at residues 177-193 (IYVAIIILLVITGLYTI). Topologically, residues 194 to 202 (TGGLAAVIY) are cytoplasmic. The chain crosses the membrane as a helical span at residues 203–221 (TDTLQTAIMMVGSVILTGF). The Extracellular portion of the chain corresponds to 222–275 (AFHEVGGYEAFTEKYMRAIPSQISYGNTSIPQKCYTPREDAFHIFRDAITGDIP). The N-linked (GlcNAc...) asparagine glycan is linked to Asn248. 5 cysteine pairs are disulfide-bonded: Cys255-Cys511, Cys255-Cys608, Cys345-Cys351, Cys355-Cys361, and Cys517-Cys522. The helical transmembrane segment at 276-295 (WPGLVFGMSILTLWYWCTDQ) threads the bilayer. Residues 296 to 309 (VIVQRCLSAKNLSH) lie on the Cytoplasmic side of the membrane. Residues 310-331 (VKAGCILCGYLKVMPMFLIVMM) traverse the membrane as a helical segment. Topologically, residues 332–375 (GMVSRILYTDKVACVVPSECERYCGTRVGCTNIAFPTLVVELMP) are extracellular. The helical transmembrane segment at 376–406 (NGLRGLMLSVMMASLMSSLTSIFNSASTLFT) threads the bilayer. Residues 407–422 (MDIYTKIRKKASEKEL) lie on the Cytoplasmic side of the membrane. The chain crosses the membrane as a helical span at residues 423-444 (MIAGRLFMLFLIGISIAWVPIV). The Extracellular portion of the chain corresponds to 445–451 (QSAQSGQ). A helical transmembrane segment spans residues 452–477 (LFDYIQSITSYLGPPIAAVFLLAIFW). Gln457 contributes to the D-glucose binding site. Over 478-481 (KRVN) the chain is Cytoplasmic. A helical transmembrane segment spans residues 482–504 (EPGAFWGLVLGFLIGISRMITEF). The Extracellular portion of the chain corresponds to 505 to 525 (AYGTGSCMEPSNCPTIICGVH). The helical transmembrane segment at 526-547 (YLYFAIILFVISIITVVVVSLF) threads the bilayer. At 548–642 (TKPIPDVHLY…TSEHPLWRTV (95 aa)) the chain is on the cytoplasmic side. Residues 643-660 (VNINGVILLAVAVFCYAY) traverse the membrane as a helical segment. The Extracellular segment spans residues 661 to 662 (FA).

It belongs to the sodium:solute symporter (SSF) (TC 2.A.21) family. N-glycosylation is not necessary for the cotransporter function. In terms of tissue distribution, found predominantly in intestine, renal cortex and in outer renal medulla.

The protein resides in the apical cell membrane. It carries out the reaction D-glucose(out) + 2 Na(+)(out) = D-glucose(in) + 2 Na(+)(in). The enzyme catalyses D-galactose(out) + 2 Na(+)(out) = D-galactose(in) + 2 Na(+)(in). Its activity is regulated as follows. Enhanced by the interaction with PDZK1IP1/MAP17; but unlike SLC5A2/SGLT2, PDZK1IP1 is not essential for SLC5A1 transporter activity. Possibly modulated by cholesterol binding. Functionally, electrogenic Na(+)-coupled sugar symporter that actively transports D-glucose or D-galactose at the plasma membrane, with a Na(+) to sugar coupling ratio of 2:1. Transporter activity is driven by a transmembrane Na(+) electrochemical gradient set by the Na(+)/K(+) pump. Has a primary role in the transport of dietary monosaccharides from enterocytes to blood. Responsible for the absorption of D-glucose or D-galactose across the apical brush-border membrane of enterocytes, whereas basolateral exit is provided by GLUT2. Additionally, functions as a D-glucose sensor in enteroendocrine cells, triggering the secretion of the incretins GCG and GIP that control food intake and energy homeostasis. Together with SGLT2, functions in reabsorption of D-glucose from glomerular filtrate, playing a nonredundant role in the S3 segment of the proximal tubules. Transports D-glucose into endometrial epithelial cells, controlling glycogen synthesis and nutritional support for the embryo as well as the decidual transformation of endometrium prior to conception. Acts as a water channel enabling passive water transport in response to the osmotic gradient created upon sugar and Na(+) uptake. Has high water conductivity comparable to aquaporins and therefore is expected to play an important role in transepithelial water permeability, especially in the small intestine. The sequence is that of Sodium/glucose cotransporter 1 (SLC5A1) from Oryctolagus cuniculus (Rabbit).